We begin with the raw amino-acid sequence, 37 residues long: Large ribosomal subunit protein bL36c (37 aa).

This sequence belongs to the bacterial ribosomal protein bL36 family.

It is found in the plastid. It localises to the chloroplast. The polypeptide is Large ribosomal subunit protein bL36c (Dioscorea elephantipes (Elephant's foot yam)).